The following is a 106-amino-acid chain: Guanyl-specific ribonuclease Th1 (106 aa).

Disulfide bonds link Cys5/Cys103 and Cys23/Cys84. Residue His39 is part of the active site. The active-site Proton acceptor is the Glu58. His92 functions as the Proton donor in the catalytic mechanism.

The protein belongs to the ribonuclease N1/T1 family.

The enzyme catalyses [RNA] containing guanosine + H2O = an [RNA fragment]-3'-guanosine-3'-phosphate + a 5'-hydroxy-ribonucleotide-3'-[RNA fragment].. This is Guanyl-specific ribonuclease Th1 from Trichoderma harzianum (Hypocrea lixii).